Here is a 435-residue protein sequence, read N- to C-terminus: Serine--tRNA ligase (435 aa).

242–244 (TAE) is an L-serine binding site. Residue 273–275 (RSE) coordinates ATP. Glu296 lines the L-serine pocket. Position 360–363 (360–363 (EISS)) interacts with ATP. Ser396 is an L-serine binding site.

The protein belongs to the class-II aminoacyl-tRNA synthetase family. Type-1 seryl-tRNA synthetase subfamily. Homodimer. The tRNA molecule binds across the dimer.

The protein localises to the cytoplasm. The catalysed reaction is tRNA(Ser) + L-serine + ATP = L-seryl-tRNA(Ser) + AMP + diphosphate + H(+). It carries out the reaction tRNA(Sec) + L-serine + ATP = L-seryl-tRNA(Sec) + AMP + diphosphate + H(+). The protein operates within aminoacyl-tRNA biosynthesis; selenocysteinyl-tRNA(Sec) biosynthesis; L-seryl-tRNA(Sec) from L-serine and tRNA(Sec): step 1/1. Its function is as follows. Catalyzes the attachment of serine to tRNA(Ser). Is also able to aminoacylate tRNA(Sec) with serine, to form the misacylated tRNA L-seryl-tRNA(Sec), which will be further converted into selenocysteinyl-tRNA(Sec). This Vibrio vulnificus (strain CMCP6) protein is Serine--tRNA ligase.